A 1413-amino-acid chain; its full sequence is DNA-directed RNA polymerase subunit beta' (1413 aa).

The Zn(2+) site is built by cysteine 70, cysteine 72, cysteine 85, and cysteine 88. Aspartate 460, aspartate 462, and aspartate 464 together coordinate Mg(2+). Cysteine 819, cysteine 893, cysteine 900, and cysteine 903 together coordinate Zn(2+). Positions 1392–1413 (EEAFDFGTPSAPAEEPQHPAAE) are disordered.

This sequence belongs to the RNA polymerase beta' chain family. The RNAP catalytic core consists of 2 alpha, 1 beta, 1 beta' and 1 omega subunit. When a sigma factor is associated with the core the holoenzyme is formed, which can initiate transcription. Requires Mg(2+) as cofactor. Zn(2+) is required as a cofactor.

The enzyme catalyses RNA(n) + a ribonucleoside 5'-triphosphate = RNA(n+1) + diphosphate. Its function is as follows. DNA-dependent RNA polymerase catalyzes the transcription of DNA into RNA using the four ribonucleoside triphosphates as substrates. This is DNA-directed RNA polymerase subunit beta' from Burkholderia orbicola (strain MC0-3).